A 254-amino-acid chain; its full sequence is 5-oxoprolinase subunit A (254 aa).

It belongs to the LamB/PxpA family. In terms of assembly, forms a complex composed of PxpA, PxpB and PxpC.

The enzyme catalyses 5-oxo-L-proline + ATP + 2 H2O = L-glutamate + ADP + phosphate + H(+). In terms of biological role, catalyzes the cleavage of 5-oxoproline to form L-glutamate coupled to the hydrolysis of ATP to ADP and inorganic phosphate. This chain is 5-oxoprolinase subunit A, found in Rhodopseudomonas palustris (strain ATCC BAA-98 / CGA009).